The sequence spans 868 residues: Protein translocase subunit SecA (868 aa).

ATP contacts are provided by residues Q85, 103-107 (GEGKT), and D508.

It belongs to the SecA family. In terms of assembly, monomer and homodimer. Part of the essential Sec protein translocation apparatus which comprises SecA, SecYEG and auxiliary proteins SecDF. Other proteins may also be involved.

The protein localises to the cell membrane. Its subcellular location is the cytoplasm. The catalysed reaction is ATP + H2O + cellular proteinSide 1 = ADP + phosphate + cellular proteinSide 2.. Functionally, part of the Sec protein translocase complex. Interacts with the SecYEG preprotein conducting channel. Has a central role in coupling the hydrolysis of ATP to the transfer of proteins into and across the cell membrane, serving as an ATP-driven molecular motor driving the stepwise translocation of polypeptide chains across the membrane. The protein is Protein translocase subunit SecA of Deinococcus radiodurans (strain ATCC 13939 / DSM 20539 / JCM 16871 / CCUG 27074 / LMG 4051 / NBRC 15346 / NCIMB 9279 / VKM B-1422 / R1).